The primary structure comprises 137 residues: Large ribosomal subunit protein uL16 (137 aa).

Belongs to the universal ribosomal protein uL16 family. In terms of assembly, part of the 50S ribosomal subunit.

Binds 23S rRNA and is also seen to make contacts with the A and possibly P site tRNAs. The protein is Large ribosomal subunit protein uL16 of Alcanivorax borkumensis (strain ATCC 700651 / DSM 11573 / NCIMB 13689 / SK2).